The sequence spans 617 residues: Probable Xaa-Pro aminopeptidase P (617 aa).

Residues Asp414, Asp425, Glu523, and Glu537 each contribute to the Mn(2+) site.

This sequence belongs to the peptidase M24B family. Requires Mn(2+) as cofactor.

It carries out the reaction Release of any N-terminal amino acid, including proline, that is linked to proline, even from a dipeptide or tripeptide.. In terms of biological role, catalyzes the removal of a penultimate prolyl residue from the N-termini of peptides. In Ajellomyces capsulatus (strain G186AR / H82 / ATCC MYA-2454 / RMSCC 2432) (Darling's disease fungus), this protein is Probable Xaa-Pro aminopeptidase P (AMPP).